The primary structure comprises 530 residues: Ubiquitin carboxyl-terminal hydrolase 17-like protein 1 (530 aa).

In terms of domain architecture, USP spans 80–375 (AGLQNMGNTC…QAYVLFYIQK (296 aa)). C89 functions as the Nucleophile in the catalytic mechanism. Residue H334 is the Proton acceptor of the active site. 2 stretches are compositionally biased toward basic and acidic residues: residues 382-392 (SESVSRGREPR) and 398-411 (DTDR…LKRD). A disordered region spans residues 382–411 (SESVSRGREPRALGAEDTDRRAKQGELKRD).

The protein belongs to the peptidase C19 family. USP17 subfamily.

The protein resides in the nucleus. The protein localises to the endoplasmic reticulum. It carries out the reaction Thiol-dependent hydrolysis of ester, thioester, amide, peptide and isopeptide bonds formed by the C-terminal Gly of ubiquitin (a 76-residue protein attached to proteins as an intracellular targeting signal).. Deubiquitinating enzyme that removes conjugated ubiquitin from specific proteins to regulate different cellular processes that may include cell proliferation, progression through the cell cycle, apoptosis, cell migration, and the cellular response to viral infection. This is Ubiquitin carboxyl-terminal hydrolase 17-like protein 1 (USP17L1) from Homo sapiens (Human).